Here is a 457-residue protein sequence, read N- to C-terminus: Angiopoietin-related protein 6 (457 aa).

Positions 1–24 (MGTARLRKLQLLLLLGAWRALGGA) are cleaved as a signal peptide. 2 coiled-coil regions span residues 51-77 (DSEL…RAAE) and 126-164 (LLAE…QHSS). The tract at residues 201-235 (SNTSRRLDQTPEHQREQSLRQQGPPSSLLPTGHLA) is disordered. N202 carries an N-linked (GlcNAc...) asparagine glycan. Over residues 205 to 218 (RRLDQTPEHQREQS) the composition is skewed to basic and acidic residues. Positions 219 to 229 (LRQQGPPSSLL) are enriched in polar residues. Residues 238–456 (TRPVGPWRDC…KAVMLTRLVR (219 aa)) form the Fibrinogen C-terminal domain. 2 disulfides stabilise this stretch: C247/C274 and C397/C410.

In terms of tissue distribution, highly expressed in the liver, specifically in hepatocytes, and weakly in the heart. Expressed in hematopoietic cells, platelets and mast cells, and detected at wounded skin.

The protein resides in the secreted. May play a role in the wound healing process. May promote epidermal proliferation, remodeling and regeneration. May promote the chemotactic activity of endothelial cells and induce neovascularization. May counteract high-fat diet-induced obesity and related insulin resistance through increased energy expenditure. The sequence is that of Angiopoietin-related protein 6 (Angptl6) from Mus musculus (Mouse).